Reading from the N-terminus, the 381-residue chain is Alkanesulfonate monooxygenase (381 aa).

Belongs to the SsuD family. Homotetramer.

It catalyses the reaction an alkanesulfonate + FMNH2 + O2 = an aldehyde + FMN + sulfite + H2O + 2 H(+). Functionally, catalyzes the desulfonation of aliphatic sulfonates. The chain is Alkanesulfonate monooxygenase from Escherichia coli O7:K1 (strain IAI39 / ExPEC).